Reading from the N-terminus, the 171-residue chain is Small ribosomal subunit protein uS5 (171 aa).

Positions 13–76 (FLERLVAVNR…DQAKKNLVTI (64 aa)) constitute an S5 DRBM domain.

It belongs to the universal ribosomal protein uS5 family. As to quaternary structure, part of the 30S ribosomal subunit. Contacts proteins S4 and S8.

Functionally, with S4 and S12 plays an important role in translational accuracy. Located at the back of the 30S subunit body where it stabilizes the conformation of the head with respect to the body. The sequence is that of Small ribosomal subunit protein uS5 from Dichelobacter nodosus (strain VCS1703A).